Consider the following 238-residue polypeptide: Ribitol-5-phosphate cytidylyltransferase (238 aa).

CTP-binding positions include 7-10 and 80-86; these read FAGG and GETGQES.

This sequence belongs to the IspD/TarI cytidylyltransferase family. TarI subfamily.

The catalysed reaction is D-ribitol 5-phosphate + CTP + H(+) = CDP-L-ribitol + diphosphate. Catalyzes the transfer of the cytidylyl group of CTP to D-ribitol 5-phosphate. The sequence is that of Ribitol-5-phosphate cytidylyltransferase from Vibrio parahaemolyticus serotype O3:K6 (strain RIMD 2210633).